The following is a 694-amino-acid chain: MLCACSGEQFRFEDQPGSPESLATRDFSASGLSSRNGGGDWDSKLEDIQVDEAESTLKEALSLNYEEARALLGRLEYQRGNFDAALQVFKGIDIKVLTPRIIKAIVEKTLPCKPRSKAVIVPPTTMSMHSVSLLLEAILLKARSLEELGSYKEAAEECKIILDVVENALPSGMPDGISGFAKLQDIFQKALELLPLLWKKAGNHHETIASYRRALSRPWNLDPQRLAVTQKSLALVLLYGSVEACPKDNIEEAIVLLMLLVKKMVVGDIQWDPELMDHLTYALSMTGQFEVLANYLEQTLPGVYTRGERWYLLSLCYSAAGIDKAAINLLKMALGPSESRQIPHIPLLLFGAKLCSKDPKHSRDGINFAHRLLDLGNSQSEHLLSQAHKFLGVCYGNAARSSKLDSERVFLQKKSLFSLNEAAKRGKADPELDVIFNLSVENAVQRNVQAALDGAVEYSSMVGGVSTKGWKHLAIVLSAEKRLKDAESILDFTMEEAGDIEKIELLRLKAVLQMAQEQPKKAMKTCSSLLGLIRAQEKSEQSESLLQKFETEAWQDLASVYGKLGSWSDAETCLEKARSMCYYSPRGWNETGLCLEAKSLHEEALISFFLSLSIEPDHVPSIVSIAEVMMKSGDESLPTAKSFLMNALRLDPRNHDAWMKLGHVAKKQGLSQQAAEFYQAAYELELSAPVQSFI.

The disordered stretch occupies residues 12–40 (FEDQPGSPESLATRDFSASGLSSRNGGGD). TPR repeat units follow at residues 32-65 (LSSR…SLNY), 66-101 (EEAR…TPRI), 135-168 (LEAI…VENA), 188-221 (QKAL…PWNL), 307-340 (GERW…SESR), 551-584 (TEAW…CYYS), 585-618 (PRGW…EPDH), 620-654 (PSIV…DPRN), and 655-688 (HDAW…ELSA).

As to quaternary structure, interacts with calmodulin in a calcium-dependent manner. In terms of tissue distribution, expressed in pollen, flowers, fruits and leaves.

This is Protein NPGR1 from Arabidopsis thaliana (Mouse-ear cress).